Consider the following 261-residue polypeptide: MAGIEVQILEKKEDSIKFVLKGVHVSFANALRRTILGEVPTFAVDEVEFYENDSALFDEIIAHRLAMIPLTTPVDRFELDALELDDYTVTLSLEAEGPGIVYSGDLKSDDPDVKPVNPNIPIVKLAEGQRLVFNAYAKLGRGKDHAKWQPGFVYYKYYTIVHISKSIPEWKELKKLAKKRGLPVEETEEEVLVTTIKPFYIPKDFEEYEGKEIWEEIVPNTYIFTVETNGELPVEEIVSIALKILMRKADRFISELQKLTS.

Belongs to the archaeal Rpo3/eukaryotic RPB3 RNA polymerase subunit family. Part of the RNA polymerase complex.

The protein localises to the cytoplasm. It catalyses the reaction RNA(n) + a ribonucleoside 5'-triphosphate = RNA(n+1) + diphosphate. In terms of biological role, DNA-dependent RNA polymerase (RNAP) catalyzes the transcription of DNA into RNA using the four ribonucleoside triphosphates as substrates. In Pyrococcus furiosus (strain ATCC 43587 / DSM 3638 / JCM 8422 / Vc1), this protein is DNA-directed RNA polymerase subunit Rpo3.